The following is a 445-amino-acid chain: GTPase Der (445 aa).

EngA-type G domains are found at residues Pro-3–Glu-167 and Ile-180–Met-353. GTP is bound by residues Gly-9 to Ser-16, Asp-56 to Phe-60, Asn-119 to Glu-122, Gly-186 to Ser-193, Asp-233 to Leu-237, and Asn-298 to Asp-301. In terms of domain architecture, KH-like spans Lys-354–Thr-438.

Belongs to the TRAFAC class TrmE-Era-EngA-EngB-Septin-like GTPase superfamily. EngA (Der) GTPase family. Associates with the 50S ribosomal subunit.

In terms of biological role, GTPase that plays an essential role in the late steps of ribosome biogenesis. The sequence is that of GTPase Der from Burkholderia pseudomallei (strain 1106a).